A 1311-amino-acid chain; its full sequence is Suppressor of presenilin protein 4 (1311 aa).

Positions 1–11 (MSSEPTSSIES) are enriched in polar residues. 2 disordered regions span residues 1–58 (MSSE…DDLN) and 75–95 (MFED…STAH). C2H2-type zinc fingers lie at residues 112 to 134 (HACH…TKMH) and 141 to 163 (FACE…NNIH). Residues 226–304 (EFDTTPPPIL…PPPVRKDVEK (79 aa)) are disordered. Positions 280–293 (SPKGSLPSSSASSV) are enriched in low complexity. C2H2-type zinc fingers lie at residues 327-349 (QRCP…SGGH), 355-379 (YICP…YILH), 451-476 (KKCN…VKTH), and 487-510 (FLCL…LIEH). Positions 544–563 (VKEEPKEADGDESGDESFDS) are disordered. The span at 552–561 (DGDESGDESF) shows a compositional bias: acidic residues. C2H2-type zinc fingers lie at residues 585-607 (FCCN…YDKH), 613-635 (FKCQ…EKLH), 709-731 (FQCT…KKRH), 737-759 (YRCV…LKQH), 794-816 (YCCD…HRNH), and 823-845 (NICS…TIIH). The interval 865-1002 (RPVSSLTDLN…ESPEPDESVE (138 aa)) is disordered. The span at 874–897 (NSEKMNERKSTKRKMLDKVEKMEV) shows a compositional bias: basic and acidic residues. Over residues 898 to 907 (GEDEEDDEES) the composition is skewed to acidic residues. The span at 908 to 920 (VDKGTDDGDYKQR) shows a compositional bias: basic and acidic residues. Positions 956–979 (NRINYSLLSKNGSGKPTPSTSSAN) are enriched in polar residues. C2H2-type zinc fingers lie at residues 1022–1044 (LKCP…RYYH), 1053–1075 (YACS…LKLH), 1104–1126 (YYCK…SAYH), 1162–1184 (KYCK…LDRH), 1190–1212 (YKCY…QLNH), and 1261–1284 (LKCP…SVHH).

In terms of tissue distribution, expressed in neurons.

Its subcellular location is the nucleus. Functionally, probable transcriptional regulator, which participates in the transcriptional repression of the presenilin protein hop-1. Might play a role in the oxidative stress response. This Caenorhabditis elegans protein is Suppressor of presenilin protein 4 (spr-4).